A 24-amino-acid chain; its full sequence is VIPFVASVAAEMMQHVYCAASRRC.

C18 and C24 are joined by a disulfide.

In terms of tissue distribution, expressed by the skin glands.

It is found in the secreted. Functionally, antimicrobial peptide. This is Brevinin-1Ra from Pelophylax ridibundus (Marsh frog).